Reading from the N-terminus, the 349-residue chain is KH domain-containing, RNA-binding, signal transduction-associated protein 2 (349 aa).

In terms of domain architecture, KH spans 65 to 135 (LIPVKQYPKF…HLSDELHVLI (71 aa)). 2 disordered regions span residues 181-263 (SEES…PPPA) and 321-349 (EWAT…YGRY). Low complexity predominate over residues 218–231 (RGVLTPRGTTVTRG). Omega-N-methylarginine occurs at positions 230 and 240. The span at 340–349 (GYREHPYGRY) shows a compositional bias: basic and acidic residues.

Belongs to the KHDRBS family. Self-associates to form homooligomers. Interacts with KHDRBS1/SAM68; heterooligomer formation of KHDRBS family proteins may modulate RNA substrate specificity. Interacts with RBMX, SAFB, SFRS9 and YTHDC1. Interacts with FYN and PLCG1 (via SH3 domain). Interacts (phosphorylated) with FYN, GRB2, PLCG1 and RASA1 (via SH2 domain). Methylated. Post-translationally, tyrosine phosphorylated by FYN, PTK6 and SRC. Tyrosine phosphorylated by SRC during mitosis. In terms of tissue distribution, expressed in heart, skin, brain, colon, spleen, kidney, cervix and testis. In adult cerebellum expressed predominantly in Purkinje cells and in the hippocampus is abundantly expressed in glutamatergic dentate granule cells and in specific inhibitory Schaffer collateral-associated and path-associated interneurons; expression is restricted to neuronal subpopulations largely non-overlapping with expression of KHDRBS3/SLM-2 (at protein level).

It localises to the nucleus. Its function is as follows. RNA-binding protein that plays a role in the regulation of alternative splicing and influences mRNA splice site selection and exon inclusion. Binds both poly(A) and poly(U) homopolymers. Phosphorylation by PTK6 inhibits its RNA-binding ability. Induces an increased concentration-dependent incorporation of exon in CD44 pre-mRNA by direct binding to purine-rich exonic enhancer. Can regulate alternative splicing of neurexins NRXN1-3 in the laminin G-like domain 6 containing the evolutionary conserved neurexin alternative spliced segment 4 (AS4) involved in neurexin selective targeting to postsynaptic partners. Regulates cell-type specific alternative splicing of NRXN1 at AS4 and acts synergystically with SAM68 in exon skipping. In contrast acts antagonistically with SAM68 in NRXN3 exon skipping at AS4. Its phosphorylation by FYN inhibits its ability to regulate splice site selection. May function as an adapter protein for Src kinases during mitosis. This is KH domain-containing, RNA-binding, signal transduction-associated protein 2 (Khdrbs2) from Mus musculus (Mouse).